We begin with the raw amino-acid sequence, 331 residues long: Aspartate carbamoyltransferase catalytic subunit (331 aa).

Carbamoyl phosphate contacts are provided by arginine 76 and threonine 77. Lysine 104 lines the L-aspartate pocket. Arginine 126, histidine 154, and glutamine 157 together coordinate carbamoyl phosphate. Residues arginine 187 and arginine 246 each coordinate L-aspartate. Residues glycine 287 and proline 288 each contribute to the carbamoyl phosphate site.

This sequence belongs to the aspartate/ornithine carbamoyltransferase superfamily. ATCase family. Heterododecamer (2C3:3R2) of six catalytic PyrB chains organized as two trimers (C3), and six regulatory PyrI chains organized as three dimers (R2).

It carries out the reaction carbamoyl phosphate + L-aspartate = N-carbamoyl-L-aspartate + phosphate + H(+). Its pathway is pyrimidine metabolism; UMP biosynthesis via de novo pathway; (S)-dihydroorotate from bicarbonate: step 2/3. In terms of biological role, catalyzes the condensation of carbamoyl phosphate and aspartate to form carbamoyl aspartate and inorganic phosphate, the committed step in the de novo pyrimidine nucleotide biosynthesis pathway. The protein is Aspartate carbamoyltransferase catalytic subunit of Dehalococcoides mccartyi (strain ATCC BAA-2100 / JCM 16839 / KCTC 5957 / BAV1).